The chain runs to 441 residues: Transcriptional regulatory protein ZraR (441 aa).

In terms of domain architecture, Response regulatory spans 7–121 (DILVVDDDIS…NLQATLEKAL (115 aa)). At Asp56 the chain carries 4-aspartylphosphate. In terms of domain architecture, Sigma-54 factor interaction spans 141–370 (MVGKSPAMQH…LENAVERAVV (230 aa)). ATP contacts are provided by Gly172, Thr173, Arg329, and Arg359. The segment at residues 421-440 (KTEAARQLGITRKTLLAKLS) is a DNA-binding region (H-T-H motif).

Monomer. Phosphorylated by ZraS.

Its subcellular location is the cytoplasm. With respect to regulation, activity of the ZraS/ZraR two-component system is repressed by the zinc-bound form of ZraP, which probably interacts with the periplasmic region of ZraS. In terms of biological role, part of the Zra signaling pathway, an envelope stress response (ESR) system composed of the periplasmic accessory protein ZraP, the histidine kinase ZraS and the transcriptional regulator ZraR. The ZraPSR system contributes to antibiotic resistance and is important for membrane integrity in the presence of membrane-targeting biocides. ZraR is a member of the two-component regulatory system ZraS/ZraR. When activated by ZraS, acts in conjunction with sigma-54 to regulate the expression of zraP in the presence of high Zn(2+) or Pb(2+) concentrations. Also positively autoregulates the expression of the zraSR operon. Binds to a region within the zraP-zraSR intergenic region that is characterized by two inverted repeats separated by a 14 bp spacer. In addition, controls a regulon of genes of diverse functions that may be critical to maintain envelope integrity and cell survival under stressful conditions. The system has no direct role in zinc or copper resistance. The sequence is that of Transcriptional regulatory protein ZraR from Escherichia coli (strain K12).